We begin with the raw amino-acid sequence, 565 residues long: Proline--tRNA ligase (565 aa).

The protein belongs to the class-II aminoacyl-tRNA synthetase family. ProS type 1 subfamily. In terms of assembly, homodimer.

The protein localises to the cytoplasm. The catalysed reaction is tRNA(Pro) + L-proline + ATP = L-prolyl-tRNA(Pro) + AMP + diphosphate. Its function is as follows. Catalyzes the attachment of proline to tRNA(Pro) in a two-step reaction: proline is first activated by ATP to form Pro-AMP and then transferred to the acceptor end of tRNA(Pro). As ProRS can inadvertently accommodate and process non-cognate amino acids such as alanine and cysteine, to avoid such errors it has two additional distinct editing activities against alanine. One activity is designated as 'pretransfer' editing and involves the tRNA(Pro)-independent hydrolysis of activated Ala-AMP. The other activity is designated 'posttransfer' editing and involves deacylation of mischarged Ala-tRNA(Pro). The misacylated Cys-tRNA(Pro) is not edited by ProRS. The chain is Proline--tRNA ligase from Lactobacillus helveticus (strain DPC 4571).